Reading from the N-terminus, the 296-residue chain is Nucleotide-binding protein SPCG_1551 (296 aa).

Position 13–20 (13–20 (GMSGAGKT)) interacts with ATP. 63-66 (DMRS) is a binding site for GTP.

This sequence belongs to the RapZ-like family.

Its function is as follows. Displays ATPase and GTPase activities. The sequence is that of Nucleotide-binding protein SPCG_1551 from Streptococcus pneumoniae (strain CGSP14).